The sequence spans 103 residues: Large ribosomal subunit protein bL21 (103 aa).

It belongs to the bacterial ribosomal protein bL21 family. Part of the 50S ribosomal subunit. Contacts protein L20.

Its function is as follows. This protein binds to 23S rRNA in the presence of protein L20. The sequence is that of Large ribosomal subunit protein bL21 from Mycolicibacterium paratuberculosis (strain ATCC BAA-968 / K-10) (Mycobacterium paratuberculosis).